Consider the following 513-residue polypeptide: GMP synthase [glutamine-hydrolyzing] (513 aa).

Residues 9–198 (LILVLDFGSQ…VRRVCNCTGE (190 aa)) form the Glutamine amidotransferase type-1 domain. Residue C86 is the Nucleophile of the active site. Active-site residues include H172 and E174. Positions 199-388 (WTMENFIEIE…LGIPEHLVWR (190 aa)) constitute a GMPS ATP-PPase domain. Position 226–232 (226–232 (SGGVDSS)) interacts with ATP.

Homodimer.

The enzyme catalyses XMP + L-glutamine + ATP + H2O = GMP + L-glutamate + AMP + diphosphate + 2 H(+). Its pathway is purine metabolism; GMP biosynthesis; GMP from XMP (L-Gln route): step 1/1. In terms of biological role, catalyzes the synthesis of GMP from XMP. The sequence is that of GMP synthase [glutamine-hydrolyzing] from Staphylococcus epidermidis (strain ATCC 35984 / DSM 28319 / BCRC 17069 / CCUG 31568 / BM 3577 / RP62A).